The following is a 437-amino-acid chain: GTPase Der (437 aa).

2 consecutive EngA-type G domains span residues Pro4–Ala167 and Ile176–Arg352. Residues Gly10–Ser17, Asp57–Ile61, Asn119–Asp122, Gly182–Ser189, Asp230–Met234, and Asn295–Asp298 each bind GTP. Positions Lys353 to Lys437 constitute a KH-like domain.

This sequence belongs to the TRAFAC class TrmE-Era-EngA-EngB-Septin-like GTPase superfamily. EngA (Der) GTPase family. In terms of assembly, associates with the 50S ribosomal subunit.

GTPase that plays an essential role in the late steps of ribosome biogenesis. This is GTPase Der from Leuconostoc citreum (strain KM20).